The following is a 1025-amino-acid chain: MSIVCSAEDSFRNLILFFRPRLKMYIQVEPVLDHLIFLSAETKEQILKKINTCGNTSAAELLLSTLEQGQWPLGWTQMFVEALEHSGNPLAARYVKPTLTDLPSPSSETAHDECLHLLTLLQPTLVDKLLINDVLDTCFEKGLLTVEDRNRISAAGNSGNESGVRELLRRIVQKENWFSTFLDVLRQTGNDALFQELTGGGCPEDNTDLANSSHRDGPAANECLLPAVDESSLETEAWNVDDILPEASCTDSSVTTESDTSLAEGSVSCFDESLGHNSNMGRDSGTMGSDSDESVIQTKRVSPEPELQLRPYQMEVAQPALDGKNIIICLPTGSGKTRVAVYITKDHLDKKKQASESGKVIVLVNKVMLAEQLFRKEFNPYLKKWYRIIGLSGDTQLKISFPEVVKSYDVIISTAQILENSLLNLESGDDDGVQLSDFSLIIIDECHHTNKEAVYNNIMRRYLKQKLRNNDLKKQNKPAIPLPQILGLTASPGVGAAKKQSEAEKHILNICANLDAFTIKTVKENLGQLKHQIKEPCKKFVIADDTRENPFKEKLLEIMASIQTYCQKSPMSDFGTQHYEQWAIQMEKKAAKDGNRKDRVCAEHLRKYNEALQINDTIRMIDAYSHLETFYTDEKEKKFAVLNDSDKSDDEASSCNDQLKGDVKKSLKLDETDEFLMNLFFDNKKMLKKLAENPKYENEKLIKLRNTILEQFTRSEESSRGIIFTKTRQSTYALSQWIMENAKFAEVGVKAHHLIGAGHSSEVKPMTQTEQKEVISKFRTGEINLLIATTVAEEGLDIKECNIVIRYGLVTNEIAMVQARGRARADESTYVLVTSSGSGVTEREIVNDFREKMMYKAINRVQNMKPEEYAHKILELQVQSILEKKMKVKRSIAKQYNDNPSLITLLCKNCSMLVCSGENIHVIEKMHHVNMTPEFKGLYIVRENKALQKKFADYQTNGEIICKCGQAWGTMMVHKGLDLPCLKIRNFVVNFKNNSPKKQYKKWVELPIRFPDLDYSEYCLYSDED.

CARD domains lie at 7-97 (AEDS…YVKP) and 110-190 (AHDE…QTGN). Residues lysine 23 and lysine 43 each participate in a glycyl lysine isopeptide (Lys-Gly) (interchain with G-Cter in ISG15) cross-link. The segment at 273 to 297 (SLGHNSNMGRDSGTMGSDSDESVIQ) is disordered. A compositionally biased stretch (polar residues) spans 275–297 (GHNSNMGRDSGTMGSDSDESVIQ). Phosphoserine occurs at positions 289, 291, and 302. Residues 317 to 510 (AQPALDGKNI…SEAEKHILNI (194 aa)) form the Helicase ATP-binding domain. Phosphoserine is present on residues serine 645 and serine 648. Residues 700–872 (KLIKLRNTIL…NMKPEEYAHK (173 aa)) enclose the Helicase C-terminal domain. Serine 828 carries the post-translational modification Phosphoserine; by RIOK3. In terms of domain architecture, RLR CTR spans 893–1020 (AKQYNDNPSL…PDLDYSEYCL (128 aa)). The Zn(2+) site is built by cysteine 907, cysteine 910, cysteine 962, and cysteine 964.

The protein belongs to the helicase family. RLR subfamily. As to quaternary structure, monomer in the absence of ligands and homodimerizes in the presence of dsRNA ligands. Can assemble into helical or linear polymeric filaments on long dsRNA. Interacts with MAVS/IPS1. Interacts (via the CARD domains) with TKFC, the interaction is inhibited by viral infection. Interacts with PCBP2. Interacts with NLRC5. Interacts with PIAS2-beta. Interacts with DDX60. Interacts with ANKRD17. Interacts with IKBKE. Interacts with ATG5 and ATG12, either as ATG5 and ATG12 monomers or as ATG12-ATG5 conjugates. Interacts with ZCCHC3; leading to activate IFIH1/MDA5. Interacts with RNF123. Interacts with DDX3X. Interacts with NOD1; this interaction promotes transcription of antiviral genes and inhibition of viral replication. Interacts with ECSIT; this interaction bridges IFIH1 to the MAVS complex at the mitochondrion. In terms of processing, during apoptosis, processed into 3 cleavage products. The helicase-containing fragment, once liberated from the CARD domains, translocate from the cytoplasm to the nucleus. The processed protein significantly sensitizes cells to DNA degradation. Sumoylated. Sumoylation positively regulates its role in type I interferon induction and is enhanced by PIAS2-beta. Post-translationally, ubiquitinated by RNF125, leading to its degradation by the proteasome. USP17/UPS17L2-dependent deubiquitination positively regulates the receptor. Ubiquitinated by TRIM25 via 'Lys-63'-linked ubiquitination, promoting activation of IFIH1/MDA5. Ubiquitinated by TRIM40 via 'Lys-48'-linked ubiquitination; leading to proteasomal degradation. Ubiquitinated by TRIM65 via 'Lys-63'-linked ubiquitination, promoting activation of IFIH1/MDA5. In terms of processing, ISGylated by ISG15. ISGylation increases upon infection with viruses. ISGylation at Lys-23 and Lys-43 is dependent of dephosphorylation, regulates mitochondrial translocation and oligomerization. Essential for IFIH1/MDA5-mediated cytokine responses and restriction of virus replication. Phosphorylated. Dephosphorylated by phsophatases PP1; dephosphorylation precedes and is required for ISGylation. As to expression, expression is prominent in lung, liver, kidney, heart and spleen (at protein level). Widely expressed at low level.

The protein resides in the cytoplasm. The protein localises to the nucleus. It is found in the mitochondrion. The enzyme catalyses ATP + H2O = ADP + phosphate + H(+). Functionally, innate immune receptor which acts as a cytoplasmic sensor of viral nucleic acids and plays a major role in sensing viral infection and in the activation of a cascade of antiviral responses including the induction of type I interferons and pro-inflammatory cytokines. Its ligands include mRNA lacking 2'-O-methylation at their 5' cap and long-dsRNA (&gt;1 kb in length). Upon ligand binding it associates with mitochondria antiviral signaling protein (MAVS/IPS1) which activates the IKK-related kinases: TBK1 and IKBKE which phosphorylate interferon regulatory factors: IRF3 and IRF7 which in turn activate transcription of antiviral immunological genes, including interferons (IFNs); IFN-alpha and IFN-beta. Responsible for detecting the Picornaviridae family members such as encephalomyocarditis virus (EMCV), mengo encephalomyocarditis virus (ENMG), and theiler's murine encephalomyelitis virus (TMEV). Can also detect other viruses such as dengue virus (DENV), west Nile virus (WNV), and reovirus. Also involved in antiviral signaling in response to viruses containing a dsDNA genome, such as vaccinia virus. Plays an important role in amplifying innate immune signaling through recognition of RNA metabolites that are produced during virus infection by ribonuclease L (RNase L). May play an important role in enhancing natural killer cell function and may be involved in growth inhibition and apoptosis in several tumor cell lines. The polypeptide is Interferon-induced helicase C domain-containing protein 1 (Mus musculus (Mouse)).